A 449-amino-acid polypeptide reads, in one-letter code: Glycerol-3-phosphate acyltransferase 3 (449 aa).

Helical transmembrane passes span 9-29 (FVLL…PAMF), 146-166 (ISVR…CVLL), and 170-190 (ITLA…VGFL). The HXXXXD motif motif lies at 238-243 (HTSPID). Residues 358 to 378 (MVSYILRMMTSWAIVCNVWYL) form a helical membrane-spanning segment.

This sequence belongs to the 1-acyl-sn-glycerol-3-phosphate acyltransferase family.

Its subcellular location is the endoplasmic reticulum membrane. It carries out the reaction sn-glycerol 3-phosphate + an acyl-CoA = a 1-acyl-sn-glycero-3-phosphate + CoA. It catalyses the reaction a 1-acyl-sn-glycero-3-phosphate + an acyl-CoA = a 1,2-diacyl-sn-glycero-3-phosphate + CoA. The enzyme catalyses dodecanoyl-CoA + sn-glycerol 3-phosphate = 1-dodecanoyl-sn-glycerol 3-phosphate + CoA. The catalysed reaction is sn-glycerol 3-phosphate + hexadecanoyl-CoA = 1-hexadecanoyl-sn-glycero-3-phosphate + CoA. It carries out the reaction sn-glycerol 3-phosphate + (9Z)-octadecenoyl-CoA = 1-(9Z-octadecenoyl)-sn-glycero-3-phosphate + CoA. It catalyses the reaction (9Z,12Z)-octadecadienoyl-CoA + sn-glycerol 3-phosphate = 1-(9Z,12Z)-octadecadienoyl-sn-glycero-3-phosphate + CoA. The enzyme catalyses 1-tetradecanoyl-sn-glycerol 3-phosphate + (9Z)-octadecenoyl-CoA = 1-tetradecanoyl-2-(9Z)-octadecenoyl-sn-glycero-3-phosphate + CoA. The catalysed reaction is 1-hexadecanoyl-sn-glycero-3-phosphate + (9Z)-octadecenoyl-CoA = 1-hexadecanoyl-2-(9Z-octadecenoyl)-sn-glycero-3-phosphate + CoA. It carries out the reaction 1-(9Z-octadecenoyl)-sn-glycero-3-phosphate + (9Z)-octadecenoyl-CoA = 1,2-di-(9Z-octadecenoyl)-sn-glycero-3-phosphate + CoA. It catalyses the reaction 1-(6Z,9Z,12Z-octadecatrienoyl)-sn-glycero-3-phosphate + (9Z)-octadecenoyl-CoA = (6Z,9Z,12Z)-octadecatrienoyl-2-(9Z)-octadecenoyl-sn-glycero-3-phosphate + CoA. The enzyme catalyses 1-(9Z,12Z,15Z)-octadecatrienoyl-sn-glycero-3-phosphate + (9Z)-octadecenoyl-CoA = 1-(9Z,12Z,15Z)-octadecatrienoyl-2-(9Z)-octadecenoyl-sn-glycero-3-phosphate + CoA. The catalysed reaction is 1-(9Z-octadecenoyl)-sn-glycero-3-phosphate + tetradecanoyl-CoA = 1-(9Z)-octadecenoyl-2-tetradecanoyl-sn-glycero-3-phosphate + CoA. It carries out the reaction 1-(9Z-octadecenoyl)-sn-glycero-3-phosphate + hexadecanoyl-CoA = 1-(9Z)-octadecenoyl-2-hexadecanoyl-sn-glycero-3-phosphate + CoA. It catalyses the reaction 1-(9Z-octadecenoyl)-sn-glycero-3-phosphate + octadecanoyl-CoA = 1-(9Z-octadecenoyl)-2-octadecanoyl-sn-glycero-3-phosphate + CoA. The enzyme catalyses 1-(9Z-octadecenoyl)-sn-glycero-3-phosphate + (9Z,12Z)-octadecadienoyl-CoA = 1-(9Z)-octadecenoyl-2-(9Z,12Z)-octadecadienoyl-sn-glycero-3-phosphate + CoA. The catalysed reaction is 1-(5Z,8Z,11Z,14Z-eicosatetraenoyl)-sn-glycero-3-phosphate + (9Z)-octadecenoyl-CoA = 1-(5Z,8Z,11Z,14Z)-eicosatetraenoyl-2-(9Z)-octadecenoyl-sn-glycero-3-phosphate + CoA. Its pathway is glycerolipid metabolism; triacylglycerol biosynthesis. It functions in the pathway phospholipid metabolism; CDP-diacylglycerol biosynthesis; CDP-diacylglycerol from sn-glycerol 3-phosphate: step 1/3. Converts glycerol-3-phosphate to 1-acyl-sn-glycerol-3-phosphate (lysophosphatidic acid or LPA) by incorporating an acyl moiety at the sn-1 position of the glycerol backbone. Also converts LPA into 1,2-diacyl-sn-glycerol-3-phosphate (phosphatidic acid or PA) by incorporating an acyl moiety at the sn-2 position of the glycerol backbone. Protects cells against lipotoxicity. The chain is Glycerol-3-phosphate acyltransferase 3 from Danio rerio (Zebrafish).